A 415-amino-acid chain; its full sequence is Type II methyltransferase M.DdeI (415 aa).

Residues 1–373 (MNIIDLFAGC…ERISWYFENI (373 aa)) form the SAM-dependent MTase C5-type domain. Cys-76 is a catalytic residue.

Belongs to the class I-like SAM-binding methyltransferase superfamily. C5-methyltransferase family.

It catalyses the reaction a 2'-deoxycytidine in DNA + S-adenosyl-L-methionine = a 5-methyl-2'-deoxycytidine in DNA + S-adenosyl-L-homocysteine + H(+). A methylase that recognizes the double-stranded sequence 5'-CTNAG-3', methylates C-1 on both strands, and protects the DNA from cleavage by the DdeI endonuclease. This Desulfomicrobium norvegicum (strain DSM 1741 / NCIMB 8310) (Desulfovibrio baculatus (strain Norway 4)) protein is Type II methyltransferase M.DdeI (ddeIM).